The chain runs to 219 residues: UPF0319 protein MS0844 (219 aa).

Positions 1 to 21 are cleaved as a signal peptide; sequence MKFRLTALAVAALLTSTASFA.

The protein belongs to the UPF0319 family.

This chain is UPF0319 protein MS0844, found in Mannheimia succiniciproducens (strain KCTC 0769BP / MBEL55E).